The chain runs to 217 residues: ATP-dependent Clp protease proteolytic subunit (217 aa).

Serine 119 functions as the Nucleophile in the catalytic mechanism. Histidine 144 is an active-site residue.

The protein belongs to the peptidase S14 family. In terms of assembly, fourteen ClpP subunits assemble into 2 heptameric rings which stack back to back to give a disk-like structure with a central cavity, resembling the structure of eukaryotic proteasomes.

It localises to the cytoplasm. It carries out the reaction Hydrolysis of proteins to small peptides in the presence of ATP and magnesium. alpha-casein is the usual test substrate. In the absence of ATP, only oligopeptides shorter than five residues are hydrolyzed (such as succinyl-Leu-Tyr-|-NHMec, and Leu-Tyr-Leu-|-Tyr-Trp, in which cleavage of the -Tyr-|-Leu- and -Tyr-|-Trp bonds also occurs).. Its function is as follows. Cleaves peptides in various proteins in a process that requires ATP hydrolysis. Has a chymotrypsin-like activity. Plays a major role in the degradation of misfolded proteins. The protein is ATP-dependent Clp protease proteolytic subunit of Bordetella petrii (strain ATCC BAA-461 / DSM 12804 / CCUG 43448).